The chain runs to 391 residues: S-adenosylmethionine synthase (391 aa).

Position 14 (H14) interacts with ATP. D16 serves as a coordination point for Mg(2+). E42 is a binding site for K(+). E55 and Q98 together coordinate L-methionine. A flexible loop region spans residues Q98–E108. Residues D172 to K174, R238 to F239, D247, R253 to K254, A270, and K274 contribute to the ATP site. D247 contributes to the L-methionine binding site. K278 serves as a coordination point for L-methionine.

This sequence belongs to the AdoMet synthase family. In terms of assembly, homotetramer; dimer of dimers. The cofactor is Mg(2+). Requires K(+) as cofactor.

The protein localises to the cytoplasm. It carries out the reaction L-methionine + ATP + H2O = S-adenosyl-L-methionine + phosphate + diphosphate. Its pathway is amino-acid biosynthesis; S-adenosyl-L-methionine biosynthesis; S-adenosyl-L-methionine from L-methionine: step 1/1. Catalyzes the formation of S-adenosylmethionine (AdoMet) from methionine and ATP. The overall synthetic reaction is composed of two sequential steps, AdoMet formation and the subsequent tripolyphosphate hydrolysis which occurs prior to release of AdoMet from the enzyme. The protein is S-adenosylmethionine synthase of Clostridium botulinum (strain Langeland / NCTC 10281 / Type F).